Consider the following 420-residue polypeptide: Glucose-1-phosphate adenylyltransferase (420 aa).

Alpha-D-glucose 1-phosphate is bound by residues Tyr107, Gly173, 188–189, and Ser206; that span reads EK.

This sequence belongs to the bacterial/plant glucose-1-phosphate adenylyltransferase family. In terms of assembly, homotetramer.

It carries out the reaction alpha-D-glucose 1-phosphate + ATP + H(+) = ADP-alpha-D-glucose + diphosphate. It functions in the pathway glycan biosynthesis; glycogen biosynthesis. Involved in the biosynthesis of ADP-glucose, a building block required for the elongation reactions to produce glycogen. Catalyzes the reaction between ATP and alpha-D-glucose 1-phosphate (G1P) to produce pyrophosphate and ADP-Glc. This is Glucose-1-phosphate adenylyltransferase from Shewanella sp. (strain ANA-3).